A 714-amino-acid chain; its full sequence is Fatty acid oxidation complex subunit alpha (714 aa).

The enoyl-CoA hydratase stretch occupies residues 1–190 (MEMASAFTLN…KLGLVDDVVP (190 aa)). The tract at residues 306–714 (APLNSVGILG…FWKTTATDLQ (409 aa)) is 3-hydroxyacyl-CoA dehydrogenase.

It in the N-terminal section; belongs to the enoyl-CoA hydratase/isomerase family. In the central section; belongs to the 3-hydroxyacyl-CoA dehydrogenase family. Heterotetramer of two alpha chains (FadJ) and two beta chains (FadI).

It localises to the cytoplasm. The catalysed reaction is a (3S)-3-hydroxyacyl-CoA = a (2E)-enoyl-CoA + H2O. The enzyme catalyses a 4-saturated-(3S)-3-hydroxyacyl-CoA = a (3E)-enoyl-CoA + H2O. It catalyses the reaction a (3S)-3-hydroxyacyl-CoA + NAD(+) = a 3-oxoacyl-CoA + NADH + H(+). It carries out the reaction (3S)-3-hydroxybutanoyl-CoA = (3R)-3-hydroxybutanoyl-CoA. It participates in lipid metabolism; fatty acid beta-oxidation. In terms of biological role, catalyzes the formation of a hydroxyacyl-CoA by addition of water on enoyl-CoA. Also exhibits 3-hydroxyacyl-CoA epimerase and 3-hydroxyacyl-CoA dehydrogenase activities. This Escherichia coli O127:H6 (strain E2348/69 / EPEC) protein is Fatty acid oxidation complex subunit alpha.